We begin with the raw amino-acid sequence, 411 residues long: Arginine deiminase (411 aa).

The active-site Amidino-cysteine intermediate is the Cys401.

Belongs to the arginine deiminase family. Post-translationally, glycosylated.

The protein resides in the cytoplasm. The catalysed reaction is L-arginine + H2O = L-citrulline + NH4(+). It functions in the pathway amino-acid degradation; L-arginine degradation via ADI pathway; carbamoyl phosphate from L-arginine: step 1/2. In Streptococcus pyogenes serotype M3 (strain ATCC BAA-595 / MGAS315), this protein is Arginine deiminase.